We begin with the raw amino-acid sequence, 242 residues long: Segregation and condensation protein A (242 aa).

This sequence belongs to the ScpA family. As to quaternary structure, component of a cohesin-like complex composed of ScpA, ScpB and the Smc homodimer, in which ScpA and ScpB bind to the head domain of Smc. The presence of the three proteins is required for the association of the complex with DNA.

Its subcellular location is the cytoplasm. Functionally, participates in chromosomal partition during cell division. May act via the formation of a condensin-like complex containing Smc and ScpB that pull DNA away from mid-cell into both cell halves. This chain is Segregation and condensation protein A, found in Streptococcus pneumoniae (strain Taiwan19F-14).